A 23-amino-acid polypeptide reads, in one-letter code: Ascaphin-1 (23 aa).

N23 is subject to Asparagine amide.

Expressed by the skin glands.

It is found in the secreted. In terms of biological role, antimicrobial peptide that shows higher potency against Gram-negative bacteria than against Gram-positive bacteria. Has a very week hemolytic activity. The sequence is that of Ascaphin-1 from Ascaphus truei (Coastal tailed frog).